A 214-amino-acid polypeptide reads, in one-letter code: Cytochrome c biogenesis ATP-binding export protein CcmA (214 aa).

Residues L12 to A214 enclose the ABC transporter domain. G44 to T51 contributes to the ATP binding site.

Belongs to the ABC transporter superfamily. CcmA exporter (TC 3.A.1.107) family. In terms of assembly, the complex is composed of two ATP-binding proteins (CcmA) and two transmembrane proteins (CcmB).

It localises to the cell inner membrane. The catalysed reaction is heme b(in) + ATP + H2O = heme b(out) + ADP + phosphate + H(+). Functionally, part of the ABC transporter complex CcmAB involved in the biogenesis of c-type cytochromes; once thought to export heme, this seems not to be the case, but its exact role is uncertain. Responsible for energy coupling to the transport system. The sequence is that of Cytochrome c biogenesis ATP-binding export protein CcmA from Xanthomonas campestris pv. campestris (strain 8004).